A 381-amino-acid chain; its full sequence is Cell division protein FtsZ (381 aa).

Residues 1-25 are disordered; sequence MKFINDAIKESEKREKPSSSSMNSE. Residues 7–17 show a composition bias toward basic and acidic residues; it reads AIKESEKREKP. Residues 48–52, 135–137, Glu166, Arg170, and Asp213 contribute to the GTP site; these read GAGNN and GTG.

Belongs to the FtsZ family. Homodimer. Polymerizes to form a dynamic ring structure in a strictly GTP-dependent manner. Interacts directly with several other division proteins.

Its subcellular location is the cytoplasm. Its function is as follows. Essential cell division protein that forms a contractile ring structure (Z ring) at the future cell division site. The regulation of the ring assembly controls the timing and the location of cell division. One of the functions of the FtsZ ring is to recruit other cell division proteins to the septum to produce a new cell wall between the dividing cells. Binds GTP and shows GTPase activity. The polypeptide is Cell division protein FtsZ (Methanothermobacter thermautotrophicus (strain ATCC 29096 / DSM 1053 / JCM 10044 / NBRC 100330 / Delta H) (Methanobacterium thermoautotrophicum)).